The sequence spans 439 residues: MAEAAAASTAAPAVIGGWTKHVTCRYFMHGLCKEGENCRYSHDLSSCKQTMICKFFQKGCCAFGDRCRYEHTKPSKQDEVPSSKPSMPLTAAPLAGTPEPVSDGPGGTTGAQEKPQGSGAVDWVNAAEFVPGQPYCGRADPVLCEGPGPLIEEEYEKEQANKEMKKQLCPYAAVGECRYGLNCAYLHGDVCDMCGLQVLHPSDTSQRSQHIRACIEAHEKDMEISFAIQRSKDMMCGVCMEVVFEKTNPSERRFGILSNCCHCYCLKCIRKWRSAKQFESKIIKSCPECRITSNFVIPSEYWVEDKEEKQQLIQKYKDGMGTKPCRYFDEGRGTCPFGANCFYKHAFPDGRLEEPQPQRRQNGSNGRNRNTRRTHLWDLLDERENSDSFDNEDEEMVRFELSEMLLMLLAAGTDDDVTDSEDEWDLFHEELDDYYELYL.

3 consecutive C3H1-type zinc fingers follow at residues 18-45, 48-74, and 163-190; these read WTKH…HDLS, KQTM…HTKP, and EMKK…HGDV. The interval 73 to 118 is disordered; sequence KPSKQDEVPSSKPSMPLTAAPLAGTPEPVSDGPGGTTGAQEKPQGS. The tract at residues 191-218 is makorin-type Cys-His; sequence CDMCGLQVLHPSDTSQRSQHIRACIEAH. The RING-type zinc finger occupies 236–290; that stretch reads CGVCMEVVFEKTNPSERRFGILSNCCHCYCLKCIRKWRSAKQFESKIIKSCPECR. A C3H1-type 4 zinc finger spans residues 319-348; sequence GMGTKPCRYFDEGRGTCPFGANCFYKHAFP. The tract at residues 352–371 is disordered; the sequence is LEEPQPQRRQNGSNGRNRNT. The segment covering 358-368 has biased composition (low complexity); the sequence is QRRQNGSNGRN.

The enzyme catalyses S-ubiquitinyl-[E2 ubiquitin-conjugating enzyme]-L-cysteine + [acceptor protein]-L-lysine = [E2 ubiquitin-conjugating enzyme]-L-cysteine + N(6)-ubiquitinyl-[acceptor protein]-L-lysine.. The protein operates within protein modification; protein ubiquitination. E3 ubiquitin ligase catalyzing the covalent attachment of ubiquitin moieties onto substrate proteins. This chain is Probable E3 ubiquitin-protein ligase makorin-1, found in Danio rerio (Zebrafish).